The chain runs to 1074 residues: Calcium-transporting ATPase 8, plasma membrane-type (1074 aa).

The segment at 1–33 (MTSLLKSSPGRRRGGDVESGKSEHADSDSDTFY) is disordered. The Cytoplasmic portion of the chain corresponds to 1 to 180 (MTSLLKSSPG…NTYPRKKGKG (180 aa)). Over residues 13-27 (RGGDVESGKSEHADS) the composition is skewed to basic and acidic residues. The tract at residues 43-54 (RLQQWRKAALVL) is interaction with calmodulin. Residues 181–201 (FLRFLWDACHDLTLIILMVAA) traverse the membrane as a helical segment. Residues 202–219 (VASLALGIKTEGIKEGWY) are Extracellular-facing. Residues 220 to 240 (DGGSIAFAVILVIVVTAVSDY) form a helical membrane-spanning segment. The Cytoplasmic segment spans residues 241–369 (KQSLQFQNLN…GEETPLQVRL (129 aa)). Residues 370–389 (NGVATFIGSIGLAVAAAVLV) form a helical membrane-spanning segment. Residues 390-426 (ILLTRYFTGHTKDNNGGPQFVKGKTKVGHVIDDVVKV) lie on the Extracellular side of the membrane. A helical membrane pass occupies residues 427–444 (LTVAVTIVVVAVPEGLPL). Topologically, residues 445 to 840 (AVTLTLAYSM…RWGRSVYANI (396 aa)) are cytoplasmic. The 4-aspartylphosphate intermediate role is filled by aspartate 482. 2 residues coordinate Mg(2+): aspartate 785 and aspartate 789. The helical transmembrane segment at 841 to 859 (QKFIQFQLTVNVAALVINV) threads the bilayer. Residues 860 to 870 (VAAISSGDVPL) are Extracellular-facing. Residues 871–891 (TAVQLLWVNLIMDTLGALALA) form a helical membrane-spanning segment. Residues 892-911 (TEPPTDHLMGRPPVGRKEPL) lie on the Cytoplasmic side of the membrane. Residues 912-934 (ITNIMWRNLLIQAIYQVSVLLTL) form a helical membrane-spanning segment. Residues 935-949 (NFRGISILGLEHEVH) lie on the Extracellular side of the membrane. Residues 950-971 (EHATRVKNTIIFNAFVLCQAFN) form a helical membrane-spanning segment. The Cytoplasmic portion of the chain corresponds to 972–989 (EFNARKPDEKNIFKGVIK). The helical transmembrane segment at 990-1011 (NRLFMGIIVITLVLQVIIVEFL) threads the bilayer. Topologically, residues 1012 to 1021 (GKFASTTKLN) are extracellular. Residues 1022 to 1043 (WKQWLICVGIGVISWPLALVGK) traverse the membrane as a helical segment. Residues 1044–1074 (FIPVPAAPISNKLKVLKFWGKKKNSSGEGSL) are Cytoplasmic-facing.

The protein belongs to the cation transport ATPase (P-type) (TC 3.A.3) family. Type IIB subfamily.

The protein resides in the cell membrane. It catalyses the reaction Ca(2+)(in) + ATP + H2O = Ca(2+)(out) + ADP + phosphate + H(+). Its activity is regulated as follows. Activated by calmodulin. This magnesium-dependent enzyme catalyzes the hydrolysis of ATP coupled with the translocation of calcium from the cytosol out of the cell. This Arabidopsis thaliana (Mouse-ear cress) protein is Calcium-transporting ATPase 8, plasma membrane-type (ACA8).